The chain runs to 210 residues: Small ribosomal subunit protein uS5 (210 aa).

Residues Met-1 to Asn-23 are compositionally biased toward basic and acidic residues. Positions Met-1 to Glu-40 are disordered. The region spanning Phe-41 to Ile-104 is the S5 DRBM domain.

The protein belongs to the universal ribosomal protein uS5 family. As to quaternary structure, part of the 30S ribosomal subunit. Contacts proteins S4 and S8.

In terms of biological role, with S4 and S12 plays an important role in translational accuracy. Its function is as follows. Located at the back of the 30S subunit body where it stabilizes the conformation of the head with respect to the body. This Paramagnetospirillum magneticum (strain ATCC 700264 / AMB-1) (Magnetospirillum magneticum) protein is Small ribosomal subunit protein uS5.